A 295-amino-acid chain; its full sequence is MAGLNVSLSFFFATFTLCEAARRASKALLPVGAYEVFAREAMRTLVELGPWAGDFGPDLLLTLLFLLFLAHGVTLDGASANPTVSLQEFLMAEESLPGTLLKLAAQGLGMQAACTLTRLCWAWELSDLHLLQSLMAQSCSSALRTSVPHGALVEAACAFCFHLTLLHLRHSPPAYSGPAVALLVTVTAYTAGPFTSAFFNPALAASVTFACSGHTLLEYVQVYWLGPLTGMVLAVLLHQGRLPHLFQRNLFYGQKNKYRAPRGKPAPASGDTQTPAKGSSVREPGRSGVEGPHSS.

Residues 1–22 are Cytoplasmic-facing; the sequence is MAGLNVSLSFFFATFTLCEAAR. Residues 23–41 form a helical membrane-spanning segment; it reads RASKALLPVGAYEVFAREA. Residues 42–55 are Extracellular-facing; sequence MRTLVELGPWAGDF. The chain crosses the membrane as a helical span at residues 56 to 74; that stretch reads GPDLLLTLLFLLFLAHGVT. Residues 75 to 76 are Cytoplasmic-facing; sequence LD. The discontinuously helical intramembrane region spans 77-114; it reads GASANPTVSLQEFLMAEESLPGTLLKLAAQGLGMQAAC. The short motif at 81 to 83 is the NPA 1 element; the sequence is NPT. At 115–120 the chain is on the cytoplasmic side; the sequence is TLTRLC. A helical transmembrane segment spans residues 121-142; sequence WAWELSDLHLLQSLMAQSCSSA. Over 143–145 the chain is Extracellular; sequence LRT. Residues 146–166 form a helical membrane-spanning segment; that stretch reads SVPHGALVEAACAFCFHLTLL. Topologically, residues 167–174 are cytoplasmic; sequence HLRHSPPA. The helical transmembrane segment at 175–191 threads the bilayer; that stretch reads YSGPAVALLVTVTAYTA. At 192-194 the chain is on the extracellular side; the sequence is GPF. Residues 195-206 constitute an intramembrane region (discontinuously helical); it reads TSAFFNPALAAS. Positions 200–202 match the NPA 2 motif; the sequence is NPA. The Extracellular segment spans residues 207–223; that stretch reads VTFACSGHTLLEYVQVY. The helical transmembrane segment at 224-244 threads the bilayer; the sequence is WLGPLTGMVLAVLLHQGRLPH. Topologically, residues 245–295 are cytoplasmic; sequence LFQRNLFYGQKNKYRAPRGKPAPASGDTQTPAKGSSVREPGRSGVEGPHSS. The disordered stretch occupies residues 257–295; the sequence is KYRAPRGKPAPASGDTQTPAKGSSVREPGRSGVEGPHSS.

The protein belongs to the MIP/aquaporin (TC 1.A.8) family. AQP11/AQP12 subfamily. Homotetramer; each monomer provides an independent water pore.

Its subcellular location is the membrane. It carries out the reaction H2O(in) = H2O(out). In terms of biological role, putative aquaporin. Could form homotetrameric transmembrane channels, with each monomer independently mediating water transport across the plasma membrane along its osmotic gradient. The chain is Putative aquaporin-12B from Homo sapiens (Human).